Reading from the N-terminus, the 610-residue chain is UvrABC system protein C (610 aa).

The region spanning 16–94 (SQPGVYRMYD…IKLYQPRYNV (79 aa)) is the GIY-YIG domain. The UVR domain occupies 204–239 (DQVLTQLIARMEKASQDLAFEEAARIRDQIQAVRRV).

Belongs to the UvrC family. Interacts with UvrB in an incision complex.

The protein resides in the cytoplasm. The UvrABC repair system catalyzes the recognition and processing of DNA lesions. UvrC both incises the 5' and 3' sides of the lesion. The N-terminal half is responsible for the 3' incision and the C-terminal half is responsible for the 5' incision. The protein is UvrABC system protein C of Salmonella paratyphi C (strain RKS4594).